The following is a 499-amino-acid chain: Glycerol kinase (499 aa).

Residue Thr-12 coordinates ADP. 3 residues coordinate ATP: Thr-12, Thr-13, and Ser-14. A sn-glycerol 3-phosphate-binding site is contributed by Thr-12. Arg-16 is an ADP binding site. Residues Arg-82, Glu-83, and Tyr-134 each contribute to the sn-glycerol 3-phosphate site. Glycerol-binding residues include Arg-82, Glu-83, and Tyr-134. Position 230 is a phosphohistidine; by HPr (His-230). Asp-244 lines the sn-glycerol 3-phosphate pocket. 2 residues coordinate glycerol: Asp-244 and Gln-245. Thr-266 and Gly-309 together coordinate ADP. ATP is bound by residues Thr-266, Gly-309, Gln-313, and Gly-410. 2 residues coordinate ADP: Gly-410 and Asn-414.

This sequence belongs to the FGGY kinase family. As to quaternary structure, homotetramer and homodimer (in equilibrium). In terms of processing, the phosphoenolpyruvate-dependent sugar phosphotransferase system (PTS), including enzyme I, and histidine-containing protein (HPr) are required for the phosphorylation, which leads to the activation of the enzyme.

It carries out the reaction glycerol + ATP = sn-glycerol 3-phosphate + ADP + H(+). Its pathway is polyol metabolism; glycerol degradation via glycerol kinase pathway; sn-glycerol 3-phosphate from glycerol: step 1/1. Activated by phosphorylation and inhibited by fructose 1,6-bisphosphate (FBP). Key enzyme in the regulation of glycerol uptake and metabolism. Catalyzes the phosphorylation of glycerol to yield sn-glycerol 3-phosphate. In Staphylococcus haemolyticus (strain JCSC1435), this protein is Glycerol kinase.